The sequence spans 404 residues: Glucose-1-phosphate adenylyltransferase 2 (404 aa).

Residues Y97, G162, 177-178, and S195 contribute to the alpha-D-glucose 1-phosphate site; that span reads EK.

The protein belongs to the bacterial/plant glucose-1-phosphate adenylyltransferase family. Homotetramer.

The enzyme catalyses alpha-D-glucose 1-phosphate + ATP + H(+) = ADP-alpha-D-glucose + diphosphate. Its pathway is glycan biosynthesis; glycogen biosynthesis. Involved in the biosynthesis of ADP-glucose, a building block required for the elongation reactions to produce glycogen. Catalyzes the reaction between ATP and alpha-D-glucose 1-phosphate (G1P) to produce pyrophosphate and ADP-Glc. In Vibrio parahaemolyticus serotype O3:K6 (strain RIMD 2210633), this protein is Glucose-1-phosphate adenylyltransferase 2.